Consider the following 2471-residue polypeptide: Probable polyketide synthase 24 (2471 aa).

Residues 21–449 (ENLVAIVGVG…GSNCCLVLSQ (429 aa)) form the Ketosynthase family 3 (KS3) domain. Catalysis depends on for beta-ketoacyl synthase activity residues cysteine 190, histidine 332, and histidine 372. The tract at residues 654-687 (GIKASFMLGHSLGEVTTAYCSGMIDIDQLCYLIY) is acyl/malonyl transferase. Serine 664 functions as the For acyl/malonyl transferase activity in the catalytic mechanism. The N-terminal hotdog fold stretch occupies residues 953–1075 (ISILGNSMQD…SNFHLNSNDN (123 aa)). Positions 953-1245 (ISILGNSMQD…VKSLTPVKDP (293 aa)) constitute a PKS/mFAS DH domain. Histidine 987 (proton acceptor; for dehydratase activity) is an active-site residue. The segment at 1094–1245 (NLSSIPWDEF…VKSLTPVKDP (152 aa)) is C-terminal hotdog fold. The active-site Proton donor; for dehydratase activity is aspartate 1157. The stretch at 1426–1469 (IINEQQQQQQQQQQQQQQQQQQQQQLLNNENNKESLKNLLVNCN) forms a coiled coil. Residues 2336-2413 (SSSTNVKNKF…MVYQIINDSL (78 aa)) enclose the Carrier domain. Serine 2373 bears the O-(pantetheine 4'-phosphoryl)serine mark.

It depends on pantetheine 4'-phosphate as a cofactor.

In terms of biological role, probable polyketide synthase. The chain is Probable polyketide synthase 24 (pks24) from Dictyostelium discoideum (Social amoeba).